The chain runs to 400 residues: Formate-dependent phosphoribosylglycinamide formyltransferase (400 aa).

N(1)-(5-phospho-beta-D-ribosyl)glycinamide is bound by residues 22 to 23 (EL) and Glu-82. Residues Arg-115, Lys-157, 162 to 167 (SSGKGQ), 197 to 200 (EGFV), and Glu-205 each bind ATP. Positions 120–315 (RLAAETLGLP…EFELHARAIL (196 aa)) constitute an ATP-grasp domain. 2 residues coordinate Mg(2+): Glu-274 and Glu-286. N(1)-(5-phospho-beta-D-ribosyl)glycinamide is bound by residues Asp-293, Lys-362, and 369 to 370 (RR).

It belongs to the PurK/PurT family. In terms of assembly, homodimer.

The enzyme catalyses N(1)-(5-phospho-beta-D-ribosyl)glycinamide + formate + ATP = N(2)-formyl-N(1)-(5-phospho-beta-D-ribosyl)glycinamide + ADP + phosphate + H(+). Its pathway is purine metabolism; IMP biosynthesis via de novo pathway; N(2)-formyl-N(1)-(5-phospho-D-ribosyl)glycinamide from N(1)-(5-phospho-D-ribosyl)glycinamide (formate route): step 1/1. Involved in the de novo purine biosynthesis. Catalyzes the transfer of formate to 5-phospho-ribosyl-glycinamide (GAR), producing 5-phospho-ribosyl-N-formylglycinamide (FGAR). Formate is provided by PurU via hydrolysis of 10-formyl-tetrahydrofolate. The chain is Formate-dependent phosphoribosylglycinamide formyltransferase from Mycolicibacterium vanbaalenii (strain DSM 7251 / JCM 13017 / BCRC 16820 / KCTC 9966 / NRRL B-24157 / PYR-1) (Mycobacterium vanbaalenii).